Here is a 283-residue protein sequence, read N- to C-terminus: MQIITEPRQMQAIAEKLRLNRQFIGVVMTMGALHEGHLSLIKLARQSAGTVILTIFVNPSQFGANEDLHQYPRPFEQDVALATAAEVDYLFAPEAGTIYPENHQTTLQCGALGERLEGERRPGHFNGVATIVTKLLHITKPHIAIFGEKDAQQLAVIRRMVEDLNLDVKIIAAPIIREENGLAVSSRNIYLSNTERSTAGILYQGICHAEKSIAEQKKNLSVIAAEIEQMIASTPGWRPDYVVFVDEERFEPAEIAEEGKEYRLLLAAYAGKVRLIDNGKIVA.

Position 30 to 37 (30 to 37) interacts with ATP; that stretch reads MGALHEGH. The Proton donor role is filled by histidine 37. Glutamine 61 serves as a coordination point for (R)-pantoate. Glutamine 61 contributes to the beta-alanine binding site. Position 147 to 150 (147 to 150) interacts with ATP; that stretch reads GEKD. Glutamine 153 contacts (R)-pantoate. ATP-binding positions include isoleucine 176 and 184-187; that span reads VSSR.

The protein belongs to the pantothenate synthetase family. As to quaternary structure, homodimer.

It is found in the cytoplasm. The catalysed reaction is (R)-pantoate + beta-alanine + ATP = (R)-pantothenate + AMP + diphosphate + H(+). It participates in cofactor biosynthesis; (R)-pantothenate biosynthesis; (R)-pantothenate from (R)-pantoate and beta-alanine: step 1/1. Catalyzes the condensation of pantoate with beta-alanine in an ATP-dependent reaction via a pantoyl-adenylate intermediate. The sequence is that of Pantothenate synthetase from Pelodictyon phaeoclathratiforme (strain DSM 5477 / BU-1).